A 117-amino-acid chain; its full sequence is Probable non-functional immunoglobulin heavy variable 1-38-4 (117 aa).

The first 19 residues, 1–19, serve as a signal peptide directing secretion; the sequence is MDWNWRILFLVVATTGAHS. A framework-1 region spans residues 20–44; that stretch reads QVQLVQSWAEVRKSGASVKVSCSFS. The 98-residue stretch at 20–117 folds into the Ig-like domain; sequence QVQLVQSWAE…EDMAVYYYAR (98 aa). The interval 45–52 is complementarity-determining-1; that stretch reads GFTITSYG. The framework-2 stretch occupies residues 53–69; that stretch reads IHWVQQSPGQGLEWMGW. The tract at residues 70–77 is complementarity-determining-2; the sequence is INPGNGSP. An N-linked (GlcNAc...) asparagine glycan is attached at Asn74. Residues 78–115 are framework-3; the sequence is SYAKKFQGRFTMTRDMSTTTAYTDLSSLTSEDMAVYYY. The tract at residues 116–117 is complementarity-determining-3; that stretch reads AR.

Most probably, the immunoglobulin is not assembled due to incorrect folding of heavy chain. Immunoglobulins are composed of two identical heavy chains and two identical light chains; disulfide-linked.

It localises to the secreted. Its subcellular location is the cell membrane. In terms of biological role, probable non-functional open reading frame (ORF) of V region of the variable domain of immunoglobulin heavy chains. Non-functional ORF generally cannot participate in the synthesis of a productive immunoglobulin chain due to altered V-(D)-J or switch recombination and/or splicing site (at mRNA level) and/or conserved amino acid change (protein level). Immunoglobulins, also known as antibodies, are membrane-bound or secreted glycoproteins produced by B lymphocytes. In the recognition phase of humoral immunity, the membrane-bound immunoglobulins serve as receptors which, upon binding of a specific antigen, trigger the clonal expansion and differentiation of B lymphocytes into immunoglobulins-secreting plasma cells. Secreted immunoglobulins mediate the effector phase of humoral immunity, which results in the elimination of bound antigens. The antigen binding site is formed by the variable domain of one heavy chain, together with that of its associated light chain. Thus, each immunoglobulin has two antigen binding sites with remarkable affinity for a particular antigen. The variable domains are assembled by a process called V-(D)-J rearrangement and can then be subjected to somatic hypermutations which, after exposure to antigen and selection, allow affinity maturation for a particular antigen. The protein is Probable non-functional immunoglobulin heavy variable 1-38-4 of Homo sapiens (Human).